We begin with the raw amino-acid sequence, 84 residues long: Hirudin-HM2 (84 aa).

A signal peptide spans 1–20 (MFSLKLFVVFLAVCICVSQA). An interaction with thrombin active site region spans residues 21–23 (VSY). Intrachain disulfides connect C26–C34, C36–C48, and C42–C57. The disordered stretch occupies residues 53–84 (SGNQCVHGEGTPKPKSQTEGDFEEIPDEDILN). O-linked (GalNAc...) threonine glycosylation occurs at T63. Over residues 72–84 (GDFEEIPDEDILN) the composition is skewed to acidic residues. Residues 73 to 84 (DFEEIPDEDILN) form an interaction with fibrinogen-binding exosite of thrombin region.

Belongs to the protease inhibitor I14 (hirudin) family.

The protein localises to the secreted. Functionally, hirudin is a potent thrombin-specific protease inhibitor. It forms a stable non-covalent complex with alpha-thrombin, thereby abolishing its ability to cleave fibrinogen. The chain is Hirudin-HM2 from Hirudinaria manillensis (Asian medical leech).